The chain runs to 920 residues: MKEYKDTLNLNETTFSMKGNLSVNEPKTYAKWQEQQAFKRMQNRKDNHGDFTLHDGPPYANGHLHLGHALNKILKDIVIKREYFKGKKIYYTPGWDCHGLPIEQQILEQLEKEKTSLENPTLFREKCRDHAKKFLEIQKNEFLQLGVLGDFEDPYKTMDFKFEASIYRALVGVAKKGLLKERHKPIYWSYACESALAEAEVEYKMKKSPSIFVAFDLKKEGLEKLKVKKASLVIWTTTPWTLYANVAIALKKDAVYALTQKGYLVAKALHEKLAALGVVDNAITHEFNSNDLEYLVATNPLNQRDSLVVLGDHVSLEDGTGAVHTAPGHGEEDYYLGLKYHLEVLMSVDEKGCYDEGIIHNQLLDKSYLGEHIFKAQKRIIEQLGDSLLLEREIEHSYPHCWRTHKPVIYRATTQWFILMDEPFIQNDGSQKTLREVALDAIEKVEFVPSSGKNRLKTMIENRPDWCLSRQRKWGVPLAFFIDKRTNKPCFESEVLEHVANLFEEKGCDVWWEYNIKDLLPPSYQDNAKHYEKVMHILDVWFDSGSTFKAVLEDYHGEKGQSPSDVVLEGSDQHRGWFQSSLLIGCVLNNQAPFKKVITHGFIVDEKGEKMSKSKGNVVSLDNLLKKHGSDVVRLWVAFNDYQNDLRVSQTFFIQTEQHYKKFRNTLKFLLANFSDMDLKNLERPHDFSPLDHFILEALETISAGVNSAFEEHDLVKGLNILMAFVTNELSGIYLDACKDSLYCDSKNNEKRQAIQMVLLAVASQLCYFLAPILTHTIEEVLEHSQVLRAFLQAKDVFDLKGISVLEKLHLKEFKKPENFEAVLALRSAFNEELDRLKKEGVVKNSLECAIEVKEKALCENLVEELLMVSFVGVAKEKLSETPAFTLFKAPFYKCPRCWRFKSELENTPCKRCEEVLKER.

The short motif at 58–68 is the 'HIGH' region element; sequence PYANGHLHLGH. Glutamate 569 provides a ligand contact to L-isoleucyl-5'-AMP. The short motif at 610-614 is the 'KMSKS' region element; that stretch reads KMSKS. Lysine 613 lines the ATP pocket. The Zn(2+) site is built by cysteine 895, cysteine 898, cysteine 910, and cysteine 913.

This sequence belongs to the class-I aminoacyl-tRNA synthetase family. IleS type 1 subfamily. As to quaternary structure, monomer. Requires Zn(2+) as cofactor.

It is found in the cytoplasm. The catalysed reaction is tRNA(Ile) + L-isoleucine + ATP = L-isoleucyl-tRNA(Ile) + AMP + diphosphate. Catalyzes the attachment of isoleucine to tRNA(Ile). As IleRS can inadvertently accommodate and process structurally similar amino acids such as valine, to avoid such errors it has two additional distinct tRNA(Ile)-dependent editing activities. One activity is designated as 'pretransfer' editing and involves the hydrolysis of activated Val-AMP. The other activity is designated 'posttransfer' editing and involves deacylation of mischarged Val-tRNA(Ile). This chain is Isoleucine--tRNA ligase, found in Helicobacter pylori (strain J99 / ATCC 700824) (Campylobacter pylori J99).